The following is a 256-amino-acid chain: UPF0246 protein HRM2_41860 (256 aa).

Belongs to the UPF0246 family.

The polypeptide is UPF0246 protein HRM2_41860 (Desulforapulum autotrophicum (strain ATCC 43914 / DSM 3382 / VKM B-1955 / HRM2) (Desulfobacterium autotrophicum)).